A 534-amino-acid chain; its full sequence is Zinc finger protein 69 homolog B (534 aa).

Residues Lys-37 and Lys-40 each participate in a glycyl lysine isopeptide (Lys-Gly) (interchain with G-Cter in SUMO2) cross-link. Residues Leu-74–Ser-145 form the KRAB domain. Residues Lys-178 and Lys-235 each participate in a glycyl lysine isopeptide (Lys-Gly) (interchain with G-Cter in SUMO2) cross-link. 9 C2H2-type zinc fingers span residues Phe-279–His-301, Phe-307–His-329, Tyr-335–His-357, Tyr-363–His-385, Phe-391–His-413, Tyr-419–His-441, Tyr-447–His-469, Tyr-475–His-497, and Tyr-503–His-525.

Belongs to the krueppel C2H2-type zinc-finger protein family.

Its subcellular location is the nucleus. May be involved in transcriptional regulation. Essential for Golgi structural integrity. The chain is Zinc finger protein 69 homolog B (ZFP69B) from Homo sapiens (Human).